Consider the following 363-residue polypeptide: Nucleoporin SEH1 (363 aa).

6 WD repeats span residues 15 to 54 (AHRD…NWRR), 60 to 101 (CHGG…SEKD), 108 to 149 (QWIR…RIYE), 158 to 206 (RWNL…VIYE), 223 to 264 (DLPC…SAIL), and 287 to 326 (GDHR…QWVK).

It belongs to the WD repeat SEC13 family. In terms of assembly, component of the nuclear pore complex (NPC). Probably part of the GATOR complex.

Its subcellular location is the nucleus. The protein resides in the nuclear pore complex. It localises to the lysosome membrane. It is found in the nucleus envelope. In terms of biological role, probable component of the nuclear pore complex (NPC) which is involved in the trafficking of macromolecules between the cytoplasm and nucleus. As a component of the GATOR complex may function in the amino acid-sensing branch of the TORC1 signaling pathway. This is Nucleoporin SEH1 from Caenorhabditis elegans.